The chain runs to 232 residues: Lipoarabinomannan carrier protein LprG (232 aa).

An N-terminal signal peptide occupies residues 1–21; it reads MQTRLTAILAAFLTAVALLAG. A lipid anchor (N-palmitoyl cysteine) is attached at C22. C22 carries the S-diacylglycerol cysteine lipid modification.

Belongs to the LppX/LprAFG lipoprotein family. In terms of processing, modified by Lgt on Cys-22 with an S-linked diacylglyceral, signal peptide is removed by LspA, Cys-22 is further modifed with a fatty acid on its amino group by Lnt yielding a triacylated protein.

It localises to the cell inner membrane. In terms of biological role, helps membrane protein MHAS_02168/C731_2106 (P55) transport triacylglycerides (TAG) across the inner cell membrane into the periplasm and probably ultimately to the outer membrane. Binds TAG in its hydrophobic cavity and transfers it between lipid bilayers. TAG probably regulates lipid metabolism and growth regulation and plays a structural role in the outer membrane. Also binds mannosides, lipoarabinomannan and lipomannan and various glycolipids in the same cavity. The lprG-MHAS_02167/C731_2107 operon complements the vancomycin sensitivity of an M.smegmatis knockout of the same operon. This chain is Lipoarabinomannan carrier protein LprG, found in Mycolicibacterium hassiacum (strain DSM 44199 / CIP 105218 / JCM 12690 / 3849) (Mycobacterium hassiacum).